The following is a 77-amino-acid chain: Exodeoxyribonuclease 7 small subunit (77 aa).

The protein belongs to the XseB family. In terms of assembly, heterooligomer composed of large and small subunits.

Its subcellular location is the cytoplasm. The enzyme catalyses Exonucleolytic cleavage in either 5'- to 3'- or 3'- to 5'-direction to yield nucleoside 5'-phosphates.. Its function is as follows. Bidirectionally degrades single-stranded DNA into large acid-insoluble oligonucleotides, which are then degraded further into small acid-soluble oligonucleotides. This Chromobacterium violaceum (strain ATCC 12472 / DSM 30191 / JCM 1249 / CCUG 213 / NBRC 12614 / NCIMB 9131 / NCTC 9757 / MK) protein is Exodeoxyribonuclease 7 small subunit.